A 282-amino-acid chain; its full sequence is Cell division protein DivIB (282 aa).

The Cytoplasmic segment spans residues 1 to 59; that stretch reads MLDDRSAIEHHKYSQRLTELERRSAAAQQRQQKKKPPKMHVGNKIRGIKIKRYVSNGER. The interval 19–41 is disordered; sequence ELERRSAAAQQRQQKKKPPKMHV. A compositionally biased stretch (basic residues) spans 31 to 41; the sequence is QQKKKPPKMHV. Residues 60 to 80 traverse the membrane as a helical segment; that stretch reads VLKLVVLFSAILLFMLYIISP. The Extracellular segment spans residues 81–282; the sequence is LSKITTLHVT…YSYDYGSKDK (202 aa). The region spanning 82–153 is the POTRA domain; that stretch reads SKITTLHVTG…QSLQISVKEN (72 aa).

It belongs to the FtsQ/DivIB family. DivIB subfamily.

It is found in the cell membrane. Cell division protein that may be involved in stabilizing or promoting the assembly of the division complex. In Limosilactobacillus reuteri (strain ATCC 55730 / SD2112) (Lactobacillus reuteri), this protein is Cell division protein DivIB.